We begin with the raw amino-acid sequence, 254 residues long: Phosphoglycerate mutase 1 (254 aa).

Residues 10 to 17 (RHGESAWN) and 23 to 24 (SG) contribute to the substrate site. H11 (tele-phosphohistidine intermediate) is an active-site residue. S14 and S23 each carry phosphoserine. Y26 is subject to Phosphotyrosine. Position 31 is a phosphoserine (S31). Substrate-binding positions include R62, 89–92 (ERHY), and K100. E89 serves as the catalytic Proton donor/acceptor. An N6-acetyllysine modification is found at K106. Residue 116 to 117 (RR) participates in substrate binding. S118 is subject to Phosphoserine. Position 187 to 188 (187 to 188 (GN)) interacts with substrate. The residue at position 251 (K251) is an N6-acetyllysine; alternate. The residue at position 251 (K251) is an N6-succinyllysine; alternate. K253 and K254 each carry N6-acetyllysine.

It belongs to the phosphoglycerate mutase family. BPG-dependent PGAM subfamily. As to quaternary structure, homodimer. In terms of processing, acetylated at Lys-253, Lys-253 and Lys-254 under high glucose condition. Acetylation increases catalytic activity. Under glucose restriction SIRT1 levels dramatically increase and it deacetylates the enzyme.

It catalyses the reaction (2R)-2-phosphoglycerate = (2R)-3-phosphoglycerate. The enzyme catalyses (2R)-3-phospho-glyceroyl phosphate = (2R)-2,3-bisphosphoglycerate + H(+). Catalyzes the interconversion of 2-phosphoglycerate and 3-phosphoglyceratea crucial step in glycolysis, by using 2,3-bisphosphoglycerate. Also catalyzes the interconversion of (2R)-2,3-bisphosphoglycerate and (2R)-3-phospho-glyceroyl phosphate. In Pongo abelii (Sumatran orangutan), this protein is Phosphoglycerate mutase 1.